Reading from the N-terminus, the 649-residue chain is MGDRSEQYGDIPPISSQHRMHGYGNNGEPAAMPGDGQQNWGSGPGIAHTHSMRTASTATPGMDNLGPSAVGGGISGIALGVANTHDRQSGIDAFRDADATLGYIPAERGYHTTGADNPYVPSPPSVGPGPDESSEGLRSHETFGSSAALSAAGAPAGNWTPPSGSRHSFLDGSYQGVASGPYQRHSAYSSQDYPADINPDDILDDGDDGFAAAPSNKPNAAGGAATGGAAGGLLGEFFGAKKAADASYDPVPGAGLPSVEKYAKPRPSGASRKRGWIIGGILAFIVIGAIVGGAVGGTLGNRRSETASESSEVSADDDTETNGDLDKNSDEIKSLMAMEGLHKVFPGMDYTPWGVQHPECDKWPPSQNNVTRDMAVLSRLTNTVRLYGTDCNQTEMVLHAIDRLELTDMKLWLGVWIDTNTTTNERQLSQLYDILDKRSDHSVFKGAIIGNEALYRAGSTKEEARKNIIDYMRQVRKHFNDHNIDIKVATSDLGDNWDETLADATDVVMSNVHPFFGGVEVSKAAGWTWSFWNSHNAPLTQGTNKGNIIAEVGWPSGGGNDCGDGANCKDDTSGAVAGVKQMNQFMADWVCPALENGTDYFWFEAFDEPWKVKFNKGDEQWEDKWGLMDPGRNLKPGIEIPDCGGKTAA.

Disordered regions lie at residues Met-1 to His-50 and Tyr-110 to Ala-224. Residues Met-1–Arg-274 are Cytoplasmic-facing. The segment covering Gly-144 to Gly-157 has biased composition (low complexity). The segment covering Asn-198–Asp-208 has biased composition (acidic residues). Residues Gly-275–Val-295 traverse the membrane as a helical; Signal-anchor for type II membrane protein segment. Topologically, residues Gly-296–Ala-649 are extracellular. Residues Asn-301 to Ser-329 are disordered. Residues Ser-314 to Gly-323 show a composition bias toward acidic residues. N-linked (GlcNAc...) asparagine glycosylation is found at Asn-369, Asn-392, and Asn-420. The active-site Proton donor is Glu-452. Catalysis depends on Glu-551, which acts as the Nucleophile. Residue Asn-596 is glycosylated (N-linked (GlcNAc...) asparagine).

The protein belongs to the glycosyl hydrolase 17 family.

It localises to the cell membrane. The enzyme catalyses Hydrolysis of (1-&gt;3)-beta-D-glucosidic linkages in (1-&gt;3)-beta-D-glucans.. Glucanases play a role in cell expansion during growth, in cell-cell fusion during mating, and in spore release during sporulation. This enzyme may be involved in beta-glucan degradation. Active on laminarin and lichenan. This Emericella nidulans (strain FGSC A4 / ATCC 38163 / CBS 112.46 / NRRL 194 / M139) (Aspergillus nidulans) protein is Glucan endo-1,3-beta-glucosidase btgC (btgC).